The chain runs to 443 residues: Thymidine phosphorylase (443 aa).

Belongs to the thymidine/pyrimidine-nucleoside phosphorylase family. In terms of assembly, homodimer.

The catalysed reaction is thymidine + phosphate = 2-deoxy-alpha-D-ribose 1-phosphate + thymine. It functions in the pathway pyrimidine metabolism; dTMP biosynthesis via salvage pathway; dTMP from thymine: step 1/2. In terms of biological role, the enzymes which catalyze the reversible phosphorolysis of pyrimidine nucleosides are involved in the degradation of these compounds and in their utilization as carbon and energy sources, or in the rescue of pyrimidine bases for nucleotide synthesis. This is Thymidine phosphorylase from Shewanella halifaxensis (strain HAW-EB4).